Consider the following 706-residue polypeptide: Drebrin (706 aa).

An N-acetylalanine modification is found at Ala2. One can recognise an ADF-H domain in the interval 3 to 134; it reads GVSFSGHRLE…DAGAIGQRLS (132 aa). Ser141 and Ser142 each carry phosphoserine. Over residues 209–236 the composition is skewed to basic and acidic residues; sequence ERMEQERQEQEERERRYREREQQIEEHR. The tract at residues 209–497 is disordered; that stretch reads ERMEQERQEQ…AEPAASVTSV (289 aa). Ser241 bears the Phosphoserine mark. Over residues 288–298 the composition is skewed to basic and acidic residues; it reads DNPREFFRQQE. The segment covering 331 to 345 has biased composition (low complexity); sequence SDSGPSSSSSSSSSP. The residue at position 344 (Ser344) is a Phosphoserine. A compositionally biased stretch (polar residues) spans 357-366; the sequence is RTPNLSSSLP. A phosphothreonine mark is found at Thr379 and Thr383. Over residues 382-396 the composition is skewed to polar residues; sequence PTRSPSDSSTASTPI. Phosphoserine occurs at positions 385, 387, and 393. Residue Thr394 is modified to Phosphothreonine. Residues 411 to 422 are compositionally biased toward pro residues; that stretch reads QPPPPPPPPPPT. Over residues 453–497 the composition is skewed to low complexity; the sequence is AAEPPQAQEPPLLQSSPLEDSMCTESPEQAALAAPAEPAASVTSV. Residue Ser468 is modified to Phosphoserine. Phosphothreonine is present on Thr550. The tract at residues 633–677 is disordered; sequence EPHLLTNGETTQKEGTQASEGYFSQSQEEEFAQSEEPCAKVPPPV. The segment covering 639-651 has biased composition (polar residues); the sequence is NGETTQKEGTQAS. Ser658 bears the Phosphoserine mark.

In terms of assembly, interacts with RUFY3. Interacts with CXCR4; this interaction is enhanced by antigenic stimulation. Interacts (via ADF-H domain) with ZMYND8 (via N-terminus); the interaction leads to sequestering of ZMYND8 in the cytoplasm. Expressed in the hippocampus, with expression in the pyramidal cells of CA1, CA2 and CA3 and in the granule cells of the dentate gyrus (at protein level). Highly expressed in brain, also present in stomach and to a lesser degree in kidney, colon, and urinary bladder. The E2 isoform is specifically expressed in adult stomach, kidney, and cultured cells.

The protein localises to the cytoplasm. The protein resides in the cell projection. It localises to the dendrite. Its subcellular location is the cell cortex. It is found in the cell junction. The protein localises to the growth cone. In terms of biological role, actin cytoskeleton-organizing protein that plays a role in the formation of cell projections. Required for actin polymerization at immunological synapses (IS) and for the recruitment of the chemokine receptor CXCR4 to IS. Plays a role in dendritic spine morphogenesis and organization, including the localization of the dopamine receptor DRD1 to the dendritic spines. Involved in memory-related synaptic plasticity in the hippocampus. The polypeptide is Drebrin (Dbn1) (Mus musculus (Mouse)).